Reading from the N-terminus, the 217-residue chain is Thiamine-phosphate synthase (217 aa).

Residues 42–46 (QFRDK) and aspartate 77 each bind 4-amino-2-methyl-5-(diphosphooxymethyl)pyrimidine. Mg(2+) is bound by residues aspartate 78 and aspartate 97. Serine 117 contacts 4-amino-2-methyl-5-(diphosphooxymethyl)pyrimidine. A 2-[(2R,5Z)-2-carboxy-4-methylthiazol-5(2H)-ylidene]ethyl phosphate-binding site is contributed by 144–146 (TIS). Residue lysine 147 participates in 4-amino-2-methyl-5-(diphosphooxymethyl)pyrimidine binding. Residues glycine 175 and 195–196 (IT) contribute to the 2-[(2R,5Z)-2-carboxy-4-methylthiazol-5(2H)-ylidene]ethyl phosphate site.

It belongs to the thiamine-phosphate synthase family. The cofactor is Mg(2+).

The catalysed reaction is 2-[(2R,5Z)-2-carboxy-4-methylthiazol-5(2H)-ylidene]ethyl phosphate + 4-amino-2-methyl-5-(diphosphooxymethyl)pyrimidine + 2 H(+) = thiamine phosphate + CO2 + diphosphate. The enzyme catalyses 2-(2-carboxy-4-methylthiazol-5-yl)ethyl phosphate + 4-amino-2-methyl-5-(diphosphooxymethyl)pyrimidine + 2 H(+) = thiamine phosphate + CO2 + diphosphate. It catalyses the reaction 4-methyl-5-(2-phosphooxyethyl)-thiazole + 4-amino-2-methyl-5-(diphosphooxymethyl)pyrimidine + H(+) = thiamine phosphate + diphosphate. Its pathway is cofactor biosynthesis; thiamine diphosphate biosynthesis; thiamine phosphate from 4-amino-2-methyl-5-diphosphomethylpyrimidine and 4-methyl-5-(2-phosphoethyl)-thiazole: step 1/1. In terms of biological role, condenses 4-methyl-5-(beta-hydroxyethyl)thiazole monophosphate (THZ-P) and 2-methyl-4-amino-5-hydroxymethyl pyrimidine pyrophosphate (HMP-PP) to form thiamine monophosphate (TMP). The protein is Thiamine-phosphate synthase of Levilactobacillus brevis (strain ATCC 367 / BCRC 12310 / CIP 105137 / JCM 1170 / LMG 11437 / NCIMB 947 / NCTC 947) (Lactobacillus brevis).